Consider the following 942-residue polypeptide: Leucine--tRNA ligase 2 (942 aa).

Positions 35–45 (PYPNSPFHLGH) match the 'HIGH' region motif. A 'KMSKS' region motif is present at residues 619–623 (KMSKS). Lys622 lines the ATP pocket.

Belongs to the class-I aminoacyl-tRNA synthetase family.

The protein localises to the cytoplasm. It catalyses the reaction tRNA(Leu) + L-leucine + ATP = L-leucyl-tRNA(Leu) + AMP + diphosphate. This chain is Leucine--tRNA ligase 2, found in Sulfolobus acidocaldarius (strain ATCC 33909 / DSM 639 / JCM 8929 / NBRC 15157 / NCIMB 11770).